A 145-amino-acid chain; its full sequence is Methyl-coenzyme M reductase I operon protein D (145 aa).

In terms of assembly, MCR is composed of three subunits: alpha, beta, and gamma. The function of proteins C and D is not known.

This Methanothermobacter marburgensis (strain ATCC BAA-927 / DSM 2133 / JCM 14651 / NBRC 100331 / OCM 82 / Marburg) (Methanobacterium thermoautotrophicum) protein is Methyl-coenzyme M reductase I operon protein D (mcrD).